We begin with the raw amino-acid sequence, 588 residues long: MSTVTFENIFHGDSADLGKLRFNPVGFGWKAYQSEDNNPTTYNGSDIRHATWFRVARHFQLRLGMRNSEKPRISFDGFKRDDLDKIKRTLQEYFNITLETRDTSLKGWNWGEAQVKGSDLVFQVQGKTAFDVPLSQVANSNIAGKYEVALEFNPPSNYKFDPKDLNKRPPDEMVEMRFYIPGKSMKKAGSDAGSGGEETELDEEGNEVSAADAFHSLIKEKADIGAVVGDSIVVFEDCLILTPRGRFSIEVYADSIRLVGKSTDHRVPFTSIHRIFLLPKLDDLHVQLVLGLDPPIRQGATRYPFLVAQWPKDEVVNAELNLTDEELAQYPDLEKTYEATTFQVVSRVLKALTGKKVTPPGSLRNAQGLNGIRANVKAVQGELYFLEKGLIFISKQPILIDFSKTDSISFSRVGGGVASARTFDMRVVSKTGGADHVFSAINKQEVGPISSFLQSKNIRLKNEMEEAIVDIDEPFSDDDEEMESPSEDERPSKAKNDKSKTKPVKKAADDDEDESDDEDFEDESSDGGSPSESDSDDDSGMASDASDPMMEELRKKTQAKRTKAKETSGSGSEDEKPKKKKAKKDDDE.

Disordered stretches follow at residues 185 to 205 (MKKA…DEEG) and 469 to 588 (VDID…DDDE). Acidic residues predominate over residues 469–486 (VDIDEPFSDDDEEMESPS). The span at 487-500 (EDERPSKAKNDKSK) shows a compositional bias: basic and acidic residues. Acidic residues predominate over residues 509-525 (DDDEDESDDEDFEDESS). Basic and acidic residues predominate over residues 573–588 (EDEKPKKKKAKKDDDE).

Belongs to the SSRP1 family. As to quaternary structure, forms a stable heterodimer with SPT16. The SPT16-POB3 dimer weakly associates with multiple molecules of NHP6 to form the FACT complex.

It is found in the nucleus. Its subcellular location is the chromosome. Component of the FACT complex, a general chromatin factor that acts to reorganize nucleosomes. The FACT complex is involved in multiple processes that require DNA as a template such as mRNA elongation, DNA replication and DNA repair. During transcription elongation the FACT complex acts as a histone chaperone that both destabilizes and restores nucleosomal structure. It facilitates the passage of RNA polymerase II and transcription by promoting the dissociation of one histone H2A-H2B dimer from the nucleosome, then subsequently promotes the reestablishment of the nucleosome following the passage of RNA polymerase II. In Cryptococcus neoformans var. neoformans serotype D (strain B-3501A) (Filobasidiella neoformans), this protein is FACT complex subunit POB3 (POB3).